The following is a 141-amino-acid chain: Nucleoside triphosphatase NudI (141 aa).

The Nudix hydrolase domain maps to methionine 1–leucine 141. The Nudix box signature appears at glycine 38–glycine 59.

The protein belongs to the Nudix hydrolase family. NudI subfamily. As to quaternary structure, monomer. It depends on Mg(2+) as a cofactor.

The enzyme catalyses a ribonucleoside 5'-triphosphate + H2O = a ribonucleoside 5'-phosphate + diphosphate + H(+). It carries out the reaction a 2'-deoxyribonucleoside 5'-triphosphate + H2O = a 2'-deoxyribonucleoside 5'-phosphate + diphosphate + H(+). It catalyses the reaction dUTP + H2O = dUMP + diphosphate + H(+). The catalysed reaction is dTTP + H2O = dTMP + diphosphate + H(+). The enzyme catalyses dCTP + H2O = dCMP + diphosphate + H(+). In terms of biological role, catalyzes the hydrolysis of nucleoside triphosphates, with a preference for pyrimidine deoxynucleoside triphosphates (dUTP, dTTP and dCTP). This chain is Nucleoside triphosphatase NudI, found in Escherichia coli O9:H4 (strain HS).